A 275-amino-acid chain; its full sequence is MSSTPSNQNIIPLIKKESIVSLFEKGTRQDGRKLTDYRPLSITLDYAKKADGSALVKLGTTMVLAGTKLEIDKPYEDTPNQGNLIVNVELLPLAYETFEPGPPDENAIELARVVDRSLRDSKALDLTKLVIEPGKSVWTVWLDVYVLDYGGNVLDACTLASVAALYNTKVYKVEQDSNGFRVNKNEVVGKLPLNHPVVTVSIAKVDKYLIVDPDLDEESIMDTKVSFSYTPDLKIVGIQKSGKGSMSLQDIDQAENTARLVAVKLLEELKKQLGI.

Belongs to the RNase PH family. Rrp42 subfamily. Component of the archaeal exosome complex. Forms a hexameric ring-like arrangement composed of 3 Rrp41-Rrp42 heterodimers. The hexameric ring associates with a trimer of Rrp4 and/or Csl4 subunits.

It is found in the cytoplasm. In terms of biological role, non-catalytic component of the exosome, which is a complex involved in RNA degradation. Contributes to the structuring of the Rrp41 active site. The sequence is that of Exosome complex component Rrp42 from Saccharolobus islandicus (strain L.S.2.15 / Lassen #1) (Sulfolobus islandicus).